A 241-amino-acid polypeptide reads, in one-letter code: Cobalt transport protein CbiM (241 aa).

A signal peptide spans 1 to 24 (MKKIKIISFSVAYLILLTPIYASA). Helical transmembrane passes span 30 to 50 (GFLPPLWAAIWSVISLPFIVG), 67 to 87 (LLLGLVGAFVFVLSALKLPSV), 99 to 119 (LGTIIFGPLPMAVIGLIVLIF), 131 to 151 (TLGANVFSMAIVGPFAGYFIF), 160 to 180 (SLAVFLAAMLADLITYIVTSL), and 202 to 222 (GIFAITQIPLAIGEGILTLIV).

This sequence belongs to the CbiM family. As to quaternary structure, forms an energy-coupling factor (ECF) transporter complex composed of an ATP-binding protein (A component, CbiO), a transmembrane protein (T component, CbiQ) and 2 possible substrate-capture proteins (S components, CbiM and CbiN) of unknown stoichimetry.

It localises to the cell membrane. It functions in the pathway cofactor biosynthesis; adenosylcobalamin biosynthesis. Functionally, part of the energy-coupling factor (ECF) transporter complex CbiMNOQ involved in cobalt import. This Acetoanaerobium sticklandii (strain ATCC 12662 / DSM 519 / JCM 1433 / CCUG 9281 / NCIMB 10654 / HF) (Clostridium sticklandii) protein is Cobalt transport protein CbiM.